The following is a 180-amino-acid chain: Large ribosomal subunit protein uL5 (180 aa).

This sequence belongs to the universal ribosomal protein uL5 family. Part of the 50S ribosomal subunit; part of the 5S rRNA/L5/L18/L25 subcomplex. Contacts the 5S rRNA and the P site tRNA. Forms a bridge to the 30S subunit in the 70S ribosome.

Functionally, this is one of the proteins that bind and probably mediate the attachment of the 5S RNA into the large ribosomal subunit, where it forms part of the central protuberance. In the 70S ribosome it contacts protein S13 of the 30S subunit (bridge B1b), connecting the 2 subunits; this bridge is implicated in subunit movement. Contacts the P site tRNA; the 5S rRNA and some of its associated proteins might help stabilize positioning of ribosome-bound tRNAs. In Moorella thermoacetica (strain ATCC 39073 / JCM 9320), this protein is Large ribosomal subunit protein uL5.